The following is a 1225-amino-acid chain: ABC transporter B family member 18 (1225 aa).

6 helical membrane passes run 23 to 43 (MALG…IFFI), 70 to 90 (VALV…GYCW), 146 to 168 (LPNF…LLLW), 172 to 194 (IVGF…ALIR), 252 to 272 (GIAI…TWYG), and 284 to 304 (GTVS…GQSL). One can recognise an ABC transmembrane type-1 1 domain in the interval 23–312 (MALGLIGAVG…SLSNLKYFSE (290 aa)). The ABC transporter 1 domain occupies 347 to 583 (VEFNHVKFTY…LDGQYTSLVR (237 aa)). 382-389 (GGSGSGKS) is a binding site for ATP. A glycan (N-linked (GlcNAc...) asparagine) is linked at asparagine 530. 2 consecutive transmembrane segments (helical) span residues 657-677 (ALYG…YSYS) and 699-719 (IYVL…ISQH). In terms of domain architecture, ABC transmembrane type-1 2 spans 657 to 945 (ALYGCLGAAL…AGTMTKDLVK (289 aa)). The N-linked (GlcNAc...) asparagine glycan is linked to asparagine 754. A run of 4 helical transmembrane segments spans residues 780–800 (LLVQ…VISW), 804–824 (IVMM…RVLL), 880–900 (SWLA…VSAL), and 919–939 (FLEI…AGTM). Asparagine 960 and asparagine 1000 each carry an N-linked (GlcNAc...) asparagine glycan. The region spanning 980 to 1218 (ISFSNVDFAY…GPKGAYFSLV (239 aa)) is the ABC transporter 2 domain. 1015–1022 (GPSGSGKS) provides a ligand contact to ATP. Asparagine 1201 carries an N-linked (GlcNAc...) asparagine glycan.

It belongs to the ABC transporter superfamily. ABCB family. Multidrug resistance exporter (TC 3.A.1.201) subfamily.

The protein resides in the membrane. The sequence is that of ABC transporter B family member 18 (ABCB18) from Arabidopsis thaliana (Mouse-ear cress).